The sequence spans 384 residues: Methylthioribose-1-phosphate isomerase (384 aa).

D255 serves as the catalytic Proton donor.

The protein belongs to the eIF-2B alpha/beta/delta subunits family. MtnA subfamily.

The protein resides in the cytoplasm. It localises to the nucleus. It catalyses the reaction 5-(methylsulfanyl)-alpha-D-ribose 1-phosphate = 5-(methylsulfanyl)-D-ribulose 1-phosphate. It participates in amino-acid biosynthesis; L-methionine biosynthesis via salvage pathway; L-methionine from S-methyl-5-thio-alpha-D-ribose 1-phosphate: step 1/6. Functionally, catalyzes the interconversion of methylthioribose-1-phosphate (MTR-1-P) into methylthioribulose-1-phosphate (MTRu-1-P). The sequence is that of Methylthioribose-1-phosphate isomerase (mri1) from Talaromyces stipitatus (strain ATCC 10500 / CBS 375.48 / QM 6759 / NRRL 1006) (Penicillium stipitatum).